A 581-amino-acid polypeptide reads, in one-letter code: Arginine--tRNA ligase (581 aa).

A 'HIGH' region motif is present at residues Pro-126–His-136.

The protein belongs to the class-I aminoacyl-tRNA synthetase family. Monomer.

It is found in the cytoplasm. It catalyses the reaction tRNA(Arg) + L-arginine + ATP = L-arginyl-tRNA(Arg) + AMP + diphosphate. The polypeptide is Arginine--tRNA ligase (Shewanella amazonensis (strain ATCC BAA-1098 / SB2B)).